The primary structure comprises 213 residues: Thiamine-phosphate synthase (213 aa).

4-amino-2-methyl-5-(diphosphooxymethyl)pyrimidine contacts are provided by residues 40–44 (QFREK) and Asn75. Mg(2+) is bound by residues Asp76 and Asp95. Ser113 contacts 4-amino-2-methyl-5-(diphosphooxymethyl)pyrimidine. 139–141 (TPS) contributes to the 2-[(2R,5Z)-2-carboxy-4-methylthiazol-5(2H)-ylidene]ethyl phosphate binding site. Position 142 (Lys142) interacts with 4-amino-2-methyl-5-(diphosphooxymethyl)pyrimidine. 2-[(2R,5Z)-2-carboxy-4-methylthiazol-5(2H)-ylidene]ethyl phosphate contacts are provided by residues Gly171 and 191–192 (IS).

The protein belongs to the thiamine-phosphate synthase family. Mg(2+) serves as cofactor.

It catalyses the reaction 2-[(2R,5Z)-2-carboxy-4-methylthiazol-5(2H)-ylidene]ethyl phosphate + 4-amino-2-methyl-5-(diphosphooxymethyl)pyrimidine + 2 H(+) = thiamine phosphate + CO2 + diphosphate. The enzyme catalyses 2-(2-carboxy-4-methylthiazol-5-yl)ethyl phosphate + 4-amino-2-methyl-5-(diphosphooxymethyl)pyrimidine + 2 H(+) = thiamine phosphate + CO2 + diphosphate. The catalysed reaction is 4-methyl-5-(2-phosphooxyethyl)-thiazole + 4-amino-2-methyl-5-(diphosphooxymethyl)pyrimidine + H(+) = thiamine phosphate + diphosphate. The protein operates within cofactor biosynthesis; thiamine diphosphate biosynthesis; thiamine phosphate from 4-amino-2-methyl-5-diphosphomethylpyrimidine and 4-methyl-5-(2-phosphoethyl)-thiazole: step 1/1. Functionally, condenses 4-methyl-5-(beta-hydroxyethyl)thiazole monophosphate (THZ-P) and 2-methyl-4-amino-5-hydroxymethyl pyrimidine pyrophosphate (HMP-PP) to form thiamine monophosphate (TMP). The polypeptide is Thiamine-phosphate synthase (Staphylococcus aureus (strain JH1)).